The chain runs to 297 residues: MSRHPMVTRLLCLVFSCLIILACSPAFAGHGAPKAQKTGILLVAFGTSVEEARPALDKMGDRVRAAHPDIPVRWAYTAKMIRAKLRAEGIAAPSPAEALAGMAEEGFTHVAVQSLHTIPGEEFHGLLETAHAFQGLPKGLTRVSVGLPLIGTTADAEAVAEALVASLPADRKPGEPVVFMGHGTPHPADICYPGLQYYLWRLDPDLLVGTVEGSPSFDNVMAELDVRKAKRVWLMPLMAVAGDHARNDMAGDEDDSWTSQLARRGIEAKPVLHGTAESDAVAAIWLRHLDDALARLN.

A signal peptide spans M1 to A28. Residue H124 participates in heme binding. H182 (proton acceptor) is an active-site residue. Residues H182, E212, and H244 each contribute to the Co(2+) site.

This sequence belongs to the CbiK family. In terms of assembly, homotetramer; dimer of dimers.

It localises to the periplasm. It carries out the reaction Co-sirohydrochlorin + 2 H(+) = sirohydrochlorin + Co(2+). The enzyme catalyses siroheme + 2 H(+) = sirohydrochlorin + Fe(2+). Its function is as follows. Catalyzes the insertion of Co(2+) into sirohydrochlorin. To a lesser extent, is also able to insert Fe(2+) into sirohydrochlorin, yielding siroheme. Its periplasmic location means that it cannot participate in cobalamin biosynthesis and its genomic environment suggests it is likely to be associated with a heme or metal transport system. The chain is Sirohydrochlorin cobaltochelatase CbiKP (cbiKp) from Nitratidesulfovibrio vulgaris (strain ATCC 29579 / DSM 644 / CCUG 34227 / NCIMB 8303 / VKM B-1760 / Hildenborough) (Desulfovibrio vulgaris).